We begin with the raw amino-acid sequence, 217 residues long: GTP cyclohydrolase 1 (217 aa).

C109, H112, and C180 together coordinate Zn(2+).

The protein belongs to the GTP cyclohydrolase I family. Toroid-shaped homodecamer, composed of two pentamers of five dimers.

It carries out the reaction GTP + H2O = 7,8-dihydroneopterin 3'-triphosphate + formate + H(+). Its pathway is cofactor biosynthesis; 7,8-dihydroneopterin triphosphate biosynthesis; 7,8-dihydroneopterin triphosphate from GTP: step 1/1. The chain is GTP cyclohydrolase 1 from Aliivibrio fischeri (strain ATCC 700601 / ES114) (Vibrio fischeri).